The chain runs to 89 residues: Probable spanin, outer lipoprotein subunit (89 aa).

Over residues 1-10 (MPPCSATSRR) the composition is skewed to polar residues. The tract at residues 1–21 (MPPCSATSRRSLPGPTPSARR) is disordered. Residues 1–47 (MPPCSATSRRSLPGPTPSARRWTVPWTRTARGLTGLCLLLSLTACAT) form the signal peptide.

Interacts (via C-terminus) with the spanin inner membrane subunit (via C-terminus). Part of the spanin complex which spans the entire periplasmic space. The spanin complex is composed of spanin inner membrane subunit and spanin outer membrane subunit.

It is found in the host cell outer membrane. Functionally, component of the spanin complex that disrupts the host outer membrane and participates in cell lysis during virus exit. The spanin complex conducts the final step in host lysis by disrupting the outer membrane after holin and endolysin action have permeabilized the inner membrane and degraded the host peptidoglycans. Host outer membrane disruption is possibly due to local fusion between the inner and outer membrane performed by the spanin complex. This Pseudomonas aeruginosa protein is Probable spanin, outer lipoprotein subunit.